A 253-amino-acid polypeptide reads, in one-letter code: Acidic endochitinase Q (253 aa).

A signal peptide spans 1 to 24 (MEFSGSPMALFCCVFFLFLTGSLA). E92 acts as the Proton donor in catalysis. An intrachain disulfide couples C212 to C244.

This sequence belongs to the glycosyl hydrolase 19 family. Chitinase class I subfamily.

The protein localises to the secreted. The catalysed reaction is Random endo-hydrolysis of N-acetyl-beta-D-glucosaminide (1-&gt;4)-beta-linkages in chitin and chitodextrins.. Functionally, defense against chitin-containing fungal pathogens. The chain is Acidic endochitinase Q from Nicotiana tabacum (Common tobacco).